Reading from the N-terminus, the 433-residue chain is Putative wall-associated receptor kinase-like 16 (433 aa).

A signal peptide spans 1–22 (MKLQHVVYLVAIFFVVAIFVIA). The Extracellular segment spans residues 23–29 (CIEENKY). A helical transmembrane segment spans residues 30 to 50 (LVWIMIILANTTNILSLVRSI). At 51–433 (SYIKNIRKHQ…VARFDIEAGR (383 aa)) the chain is on the cytoplasmic side. Threonine 97 bears the Phosphothreonine mark. One can recognise a Protein kinase domain in the interval 108 to 391 (YDVSRILGQG…RAKTTKHNWL (284 aa)). ATP-binding positions include 114-122 (LGQGGQWTV) and lysine 136. Phosphotyrosine is present on tyrosine 181. The active-site Proton acceptor is the aspartate 233. Threonine 267 and threonine 272 each carry phosphothreonine. Tyrosine 280 carries the post-translational modification Phosphotyrosine.

This sequence belongs to the protein kinase superfamily. Ser/Thr protein kinase family.

It is found in the membrane. The enzyme catalyses L-seryl-[protein] + ATP = O-phospho-L-seryl-[protein] + ADP + H(+). It carries out the reaction L-threonyl-[protein] + ATP = O-phospho-L-threonyl-[protein] + ADP + H(+). Its function is as follows. Putative serine/threonine-protein kinase that may function as a signaling receptor of extracellular matrix component. The chain is Putative wall-associated receptor kinase-like 16 (WAKL16) from Arabidopsis thaliana (Mouse-ear cress).